The primary structure comprises 202 residues: B-cell CLL/lymphoma 7 protein family member B (202 aa).

A disordered region spans residues 53-202 (DSKEKEKSKS…PVVPQTTSES (150 aa)). The segment covering 90 to 99 (ENSNQSSVSD) has biased composition (polar residues). Over residues 107–123 (SSTNSSPSPQQSESLSP) the composition is skewed to low complexity. A phosphoserine mark is found at serine 114, serine 118, serine 120, serine 122, serine 127, serine 148, and serine 152.

Belongs to the BCL7 family.

Functionally, positive regulator of apoptosis. Plays a role in the Wnt signaling pathway, negatively regulating the expression of Wnt signaling components CTNNB1 and HMGA1. Involved in cell cycle progression, maintenance of the nuclear structure and stem cell differentiation. May play a role in lung tumor development or progression. This chain is B-cell CLL/lymphoma 7 protein family member B (Bcl7b), found in Mus musculus (Mouse).